The chain runs to 428 residues: Ribosomal RNA small subunit methyltransferase B (428 aa).

S-adenosyl-L-methionine-binding positions include 253–259 (CAAPGGK), Asp276, Asp302, and Asp321. Cys374 acts as the Nucleophile in catalysis.

It belongs to the class I-like SAM-binding methyltransferase superfamily. RsmB/NOP family.

It is found in the cytoplasm. It carries out the reaction cytidine(967) in 16S rRNA + S-adenosyl-L-methionine = 5-methylcytidine(967) in 16S rRNA + S-adenosyl-L-homocysteine + H(+). Its function is as follows. Specifically methylates the cytosine at position 967 (m5C967) of 16S rRNA. The polypeptide is Ribosomal RNA small subunit methyltransferase B (Citrobacter koseri (strain ATCC BAA-895 / CDC 4225-83 / SGSC4696)).